The primary structure comprises 286 residues: Shikimate dehydrogenase (NADP(+)) (286 aa).

Shikimate is bound by residues 19-21 and T66; that span reads SLS. The active-site Proton acceptor is K70. Residues N91 and D107 each contribute to the shikimate site. Residues 129–133 and L229 each bind NADP(+); that span reads GSGGA. Shikimate is bound at residue Y231. Residue G252 coordinates NADP(+).

Belongs to the shikimate dehydrogenase family. In terms of assembly, homodimer.

The catalysed reaction is shikimate + NADP(+) = 3-dehydroshikimate + NADPH + H(+). It participates in metabolic intermediate biosynthesis; chorismate biosynthesis; chorismate from D-erythrose 4-phosphate and phosphoenolpyruvate: step 4/7. Its function is as follows. Involved in the biosynthesis of the chorismate, which leads to the biosynthesis of aromatic amino acids. Catalyzes the reversible NADPH linked reduction of 3-dehydroshikimate (DHSA) to yield shikimate (SA). This Prochlorococcus marinus (strain AS9601) protein is Shikimate dehydrogenase (NADP(+)).